The following is a 155-amino-acid chain: RNA pyrophosphohydrolase (155 aa).

Residues 6–148 enclose the Nudix hydrolase domain; that stretch reads GYRANVAIVL…KQDVYRRALT (143 aa). A Nudix box motif is present at residues 38–59; it reads GGVATGETPLQAMYRELYEEVG.

This sequence belongs to the Nudix hydrolase family. RppH subfamily. A divalent metal cation serves as cofactor.

Functionally, accelerates the degradation of transcripts by removing pyrophosphate from the 5'-end of triphosphorylated RNA, leading to a more labile monophosphorylated state that can stimulate subsequent ribonuclease cleavage. This is RNA pyrophosphohydrolase from Francisella philomiragia subsp. philomiragia (strain ATCC 25017 / CCUG 19701 / FSC 153 / O#319-036).